We begin with the raw amino-acid sequence, 129 residues long: Large ribosomal subunit protein bL20 (129 aa).

It belongs to the bacterial ribosomal protein bL20 family.

Its function is as follows. Binds directly to 23S ribosomal RNA and is necessary for the in vitro assembly process of the 50S ribosomal subunit. It is not involved in the protein synthesizing functions of that subunit. The protein is Large ribosomal subunit protein bL20 of Mycobacterium sp. (strain JLS).